We begin with the raw amino-acid sequence, 498 residues long: Serine hydroxymethyltransferase, mitochondrial (498 aa).

At Lys273 the chain carries N6-(pyridoxal phosphate)lysine.

Belongs to the SHMT family. Homotetramer. Requires pyridoxal 5'-phosphate as cofactor.

The protein resides in the mitochondrion. It carries out the reaction (6R)-5,10-methylene-5,6,7,8-tetrahydrofolate + glycine + H2O = (6S)-5,6,7,8-tetrahydrofolate + L-serine. It participates in one-carbon metabolism; tetrahydrofolate interconversion. Interconversion of serine and glycine. In Kluyveromyces lactis (strain ATCC 8585 / CBS 2359 / DSM 70799 / NBRC 1267 / NRRL Y-1140 / WM37) (Yeast), this protein is Serine hydroxymethyltransferase, mitochondrial (SHM1).